Here is a 179-residue protein sequence, read N- to C-terminus: Disulfide bond formation protein B (179 aa).

The Cytoplasmic segment spans residues 1–14; the sequence is MLSYFKELSLRRPA. The chain crosses the membrane as a helical span at residues 15-31; that stretch reads WLLLATLACTLEVTGLY. Residues 32-49 are Periplasmic-facing; the sequence is FQHKLGLIPCVMCIYERV. The cysteines at positions 41 and 44 are disulfide-linked. The chain crosses the membrane as a helical span at residues 50 to 65; sequence ALTGLLIAGLIALIAP. At 66–72 the chain is on the cytoplasmic side; it reads NFFLFRW. The chain crosses the membrane as a helical span at residues 73–90; sequence LALVLWGFSAFKGLSLSI. Residues 91 to 146 lie on the Periplasmic side of the membrane; the sequence is KHYDYQANPSPWNQCEFKPQFPQTIPLDEWFPNIFAAGTVNCSEKQWQMLGWGMPE. A disulfide bridge links C105 with C132. A helical transmembrane segment spans residues 147–165; it reads WLIVAFSLFMLFFLIVFMS. Residues 166-179 lie on the Cytoplasmic side of the membrane; sequence QFKRAKPQYRSVFR.

This sequence belongs to the DsbB family.

It localises to the cell inner membrane. Its function is as follows. Required for disulfide bond formation in some periplasmic proteins. Acts by oxidizing the DsbA protein. The chain is Disulfide bond formation protein B from Haemophilus ducreyi (strain 35000HP / ATCC 700724).